We begin with the raw amino-acid sequence, 56 residues long: Large ribosomal subunit protein bL33 (56 aa).

This sequence belongs to the bacterial ribosomal protein bL33 family.

This is Large ribosomal subunit protein bL33 from Rickettsia africae (strain ESF-5).